The sequence spans 270 residues: Glucosamine-6-phosphate deaminase (270 aa).

Aspartate 72 acts as the Proton acceptor; for enolization step in catalysis. Residue aspartate 141 is the For ring-opening step of the active site. Histidine 143 serves as the catalytic Proton acceptor; for ring-opening step. Residue glutamate 148 is the For ring-opening step of the active site.

The protein belongs to the glucosamine/galactosamine-6-phosphate isomerase family. NagB subfamily.

It catalyses the reaction alpha-D-glucosamine 6-phosphate + H2O = beta-D-fructose 6-phosphate + NH4(+). It functions in the pathway amino-sugar metabolism; N-acetylneuraminate degradation; D-fructose 6-phosphate from N-acetylneuraminate: step 5/5. Allosterically activated by N-acetylglucosamine 6-phosphate (GlcNAc6P). Its function is as follows. Catalyzes the reversible isomerization-deamination of glucosamine 6-phosphate (GlcN6P) to form fructose 6-phosphate (Fru6P) and ammonium ion. The protein is Glucosamine-6-phosphate deaminase of Bacteroides fragilis (strain ATCC 25285 / DSM 2151 / CCUG 4856 / JCM 11019 / LMG 10263 / NCTC 9343 / Onslow / VPI 2553 / EN-2).